A 66-amino-acid polypeptide reads, in one-letter code: Large ribosomal subunit protein bL35 (66 aa).

Composition is skewed to basic residues over residues 1 to 16 (MPKQ…RVKR) and 23 to 45 (KRGR…RQLR). A disordered region spans residues 1–53 (MPKQKTHRGLAKRVKRTGGGGLKRGRAFTSHRFHGKTKKQRRQLRKASMVAKG).

Belongs to the bacterial ribosomal protein bL35 family.

This chain is Large ribosomal subunit protein bL35, found in Enterococcus faecalis (strain ATCC 700802 / V583).